The chain runs to 92 residues: Conotoxin Im9.4 (92 aa).

Positions 1-20 (MHRSLAGSAVLMLLLLFALG) are cleaved as a signal peptide. The propeptide occupies 21–62 (NFVGVQPGLVTRDADNGQLMDNRRNLRLERKTMSLFKSLDKR). Disulfide bonds link C65-C79, C69-C81, and C75-C87. N90 carries the asparagine amide modification.

It belongs to the conotoxin P superfamily. Expressed by the venom duct.

It is found in the secreted. Functionally, probable neurotoxin that inhibits ion channels. This is Conotoxin Im9.4 from Conus imperialis (Imperial cone).